The primary structure comprises 432 residues: Adenylosuccinate synthetase (432 aa).

Residues 13–19 (GDEGKGK) and 41–43 (GHT) each bind GTP. Aspartate 14 functions as the Proton acceptor in the catalytic mechanism. Mg(2+) contacts are provided by aspartate 14 and glycine 41. Residues 14–17 (DEGK), 39–42 (NAGH), threonine 130, arginine 144, glutamine 225, threonine 240, and arginine 304 each bind IMP. The active-site Proton donor is the histidine 42. A substrate-binding site is contributed by 300 to 306 (ATTGRRR). GTP contacts are provided by residues arginine 306, 332–334 (KLD), and 415–417 (STG).

It belongs to the adenylosuccinate synthetase family. Homodimer. It depends on Mg(2+) as a cofactor.

The protein localises to the cytoplasm. The enzyme catalyses IMP + L-aspartate + GTP = N(6)-(1,2-dicarboxyethyl)-AMP + GDP + phosphate + 2 H(+). It participates in purine metabolism; AMP biosynthesis via de novo pathway; AMP from IMP: step 1/2. In terms of biological role, plays an important role in the de novo pathway of purine nucleotide biosynthesis. Catalyzes the first committed step in the biosynthesis of AMP from IMP. The chain is Adenylosuccinate synthetase from Pectobacterium atrosepticum (strain SCRI 1043 / ATCC BAA-672) (Erwinia carotovora subsp. atroseptica).